We begin with the raw amino-acid sequence, 241 residues long: Ribonuclease PH (241 aa).

Phosphate contacts are provided by residues Arg89 and 127-129 (GTR).

It belongs to the RNase PH family. In terms of assembly, homohexameric ring arranged as a trimer of dimers.

It carries out the reaction tRNA(n+1) + phosphate = tRNA(n) + a ribonucleoside 5'-diphosphate. Phosphorolytic 3'-5' exoribonuclease that plays an important role in tRNA 3'-end maturation. Removes nucleotide residues following the 3'-CCA terminus of tRNAs; can also add nucleotides to the ends of RNA molecules by using nucleoside diphosphates as substrates, but this may not be physiologically important. Probably plays a role in initiation of 16S rRNA degradation (leading to ribosome degradation) during starvation. This chain is Ribonuclease PH, found in Xanthomonas oryzae pv. oryzae (strain MAFF 311018).